An 861-amino-acid polypeptide reads, in one-letter code: ToMV susceptible protein tm-2 (861 aa).

Residues 63 to 83 (VKNLLKDIQELAGDVEDLLDD) are a coiled coil. In terms of domain architecture, NB-ARC spans 162–388 (DDFNMLQAKL…LESMGHKVQD (227 aa)). 185 to 192 (GMPGLGKT) contributes to the ATP binding site. LRR repeat units lie at residues 225–248 (LDIAKQIGLTEQKIKENLEDNLRS), 305–327 (LHALQPLESEKSFELFTKKIFNF), 388–411 (DGCAKVLALSYNDLPIASRPCFLY), 449–472 (LAEDVLNDLVSRNLIQLAKRTYNG), 510–536 (VARLRRITFYSDNVMIEFFGSNPKLEK), 585–608 (MTCLRYLKLEGNICGKLPNSIVKL), 609–631 (TRLETIDIDRRSLIQLPSGVWES), 652–680 (ISSFYPNIYSLHPNNLQTLMWIPDKFFEP), 689–713 (LRKLGILGVSNSTVKILSTCRPVPK), 735–758 (YPKIVKLHLNVDRTIALNSEAFPP), 781–804 (LPKLRKLKMVICKYNEEKMALSGE), and 810–835 (FPQLEVLHIHSPNGLSEVTCTDDVSM).

This sequence belongs to the disease resistance NB-LRR family. In terms of assembly, (Microbial infection) Fails to interact with the tobamovirus mouvement protein of tobacco mosaic virus (TMV).

Its subcellular location is the cell membrane. In terms of biological role, potential inhibitor of viral mouvements which may confer resistance to some tobamoviruses but not to the tomato mosaic virus (ToMV) and tobacco mosaic virus (TMV). The polypeptide is ToMV susceptible protein tm-2 (Solanum lycopersicum (Tomato)).